Reading from the N-terminus, the 901-residue chain is Protein translocase subunit SecA (901 aa).

ATP contacts are provided by residues Gln87, Gly105–Thr109, and Asp512. A disordered region spans residues His859–Gln901. Positions 885, 887, 896, and 897 each coordinate Zn(2+). Residues Lys891–Gln901 show a composition bias toward basic residues.

The protein belongs to the SecA family. In terms of assembly, monomer and homodimer. Part of the essential Sec protein translocation apparatus which comprises SecA, SecYEG and auxiliary proteins SecDF-YajC and YidC. It depends on Zn(2+) as a cofactor.

Its subcellular location is the cell inner membrane. The protein resides in the cytoplasm. The catalysed reaction is ATP + H2O + cellular proteinSide 1 = ADP + phosphate + cellular proteinSide 2.. Its function is as follows. Part of the Sec protein translocase complex. Interacts with the SecYEG preprotein conducting channel. Has a central role in coupling the hydrolysis of ATP to the transfer of proteins into and across the cell membrane, serving both as a receptor for the preprotein-SecB complex and as an ATP-driven molecular motor driving the stepwise translocation of polypeptide chains across the membrane. This Escherichia coli O9:H4 (strain HS) protein is Protein translocase subunit SecA.